The sequence spans 319 residues: tRNA uridine(34) hydroxylase (319 aa).

Residues 127–221 (KQEDTVIIDA…YGKDPEVQGE (95 aa)) form the Rhodanese domain. The active-site Cysteine persulfide intermediate is Cys-181.

This sequence belongs to the TrhO family.

The enzyme catalyses uridine(34) in tRNA + AH2 + O2 = 5-hydroxyuridine(34) in tRNA + A + H2O. Catalyzes oxygen-dependent 5-hydroxyuridine (ho5U) modification at position 34 in tRNAs. The polypeptide is tRNA uridine(34) hydroxylase (Bacillus cereus (strain AH187)).